The chain runs to 230 residues: Leucyl/phenylalanyl-tRNA--protein transferase (230 aa).

It belongs to the L/F-transferase family.

The protein localises to the cytoplasm. It carries out the reaction N-terminal L-lysyl-[protein] + L-leucyl-tRNA(Leu) = N-terminal L-leucyl-L-lysyl-[protein] + tRNA(Leu) + H(+). The catalysed reaction is N-terminal L-arginyl-[protein] + L-leucyl-tRNA(Leu) = N-terminal L-leucyl-L-arginyl-[protein] + tRNA(Leu) + H(+). It catalyses the reaction L-phenylalanyl-tRNA(Phe) + an N-terminal L-alpha-aminoacyl-[protein] = an N-terminal L-phenylalanyl-L-alpha-aminoacyl-[protein] + tRNA(Phe). Functionally, functions in the N-end rule pathway of protein degradation where it conjugates Leu, Phe and, less efficiently, Met from aminoacyl-tRNAs to the N-termini of proteins containing an N-terminal arginine or lysine. The polypeptide is Leucyl/phenylalanyl-tRNA--protein transferase (Hamiltonella defensa subsp. Acyrthosiphon pisum (strain 5AT)).